The following is a 127-amino-acid chain: Protein ApaG (127 aa).

The region spanning 3–127 (DDPRYRVEVE…FVLSVPRTLH (125 aa)) is the ApaG domain.

The protein is Protein ApaG of Xanthomonas campestris pv. campestris (strain 8004).